The following is a 1171-amino-acid chain: Kinesin-like protein GA13060 (1171 aa).

Residues 1–24 are disordered; sequence MASSISRNGGFCGALQRAPPPMPP. In terms of domain architecture, Kinesin motor spans 40 to 400; sequence KVKVMLRVSD…IQIASRIHRL (361 aa). Disordered regions lie at residues 737–774, 798–820, 932–955, 1043–1099, and 1124–1143; these read LLGQ…GSRD, LVAS…SQRS, PAYR…SLPS, TSSE…QRHR, and RHSH…EGNG. The segment covering 805-816 has biased composition (basic residues); the sequence is SSHHQHQHHRPS. Polar residues predominate over residues 1043 to 1059; sequence TSSEAYDSGHDSNSTPR. Basic residues predominate over residues 1124–1139; it reads RHSHGVGGHKKHRHRH.

It belongs to the TRAFAC class myosin-kinesin ATPase superfamily. Kinesin family. KIF26 subfamily.

Its subcellular location is the cytoplasm. The protein localises to the cytoskeleton. The chain is Kinesin-like protein GA13060 from Drosophila pseudoobscura pseudoobscura (Fruit fly).